The sequence spans 830 residues: Leucine--tRNA ligase (830 aa).

A 'HIGH' region motif is present at residues 34-44; the sequence is PYPSGNIHMGH. A 'KMSKS' region motif is present at residues 592 to 596; sequence KMSKS. Position 595 (lysine 595) interacts with ATP.

The protein belongs to the class-I aminoacyl-tRNA synthetase family.

The protein resides in the cytoplasm. It catalyses the reaction tRNA(Leu) + L-leucine + ATP = L-leucyl-tRNA(Leu) + AMP + diphosphate. The protein is Leucine--tRNA ligase of Ehrlichia ruminantium (strain Welgevonden).